The chain runs to 338 residues: Probable arabinan endo-1,5-alpha-L-arabinosidase A (338 aa).

The N-terminal stretch at 1–20 (MRASFVVTAPLLAAAVHGYA) is a signal peptide. Residue D33 is the Proton acceptor of the active site. E217 acts as the Proton donor in catalysis.

The protein belongs to the glycosyl hydrolase 43 family.

The protein localises to the secreted. The catalysed reaction is Endohydrolysis of (1-&gt;5)-alpha-arabinofuranosidic linkages in (1-&gt;5)-arabinans.. It participates in glycan metabolism; L-arabinan degradation. Endo-1,5-alpha-L-arabinanase involved in degradation of pectin. Its preferred substrate is linear 1,5-alpha-L-arabinan. This Aspergillus terreus (strain NIH 2624 / FGSC A1156) protein is Probable arabinan endo-1,5-alpha-L-arabinosidase A (abnA).